Consider the following 493-residue polypeptide: Probable malate:quinone oxidoreductase (493 aa).

The protein belongs to the MQO family. FAD serves as cofactor.

The catalysed reaction is (S)-malate + a quinone = a quinol + oxaloacetate. It participates in carbohydrate metabolism; tricarboxylic acid cycle; oxaloacetate from (S)-malate (quinone route): step 1/1. In Mycobacterium marinum (strain ATCC BAA-535 / M), this protein is Probable malate:quinone oxidoreductase.